The following is a 136-amino-acid chain: Small ribosomal subunit protein uS11c (136 aa).

The protein belongs to the universal ribosomal protein uS11 family. As to quaternary structure, part of the 30S ribosomal subunit.

The protein resides in the plastid. It localises to the chloroplast. This chain is Small ribosomal subunit protein uS11c, found in Guizotia abyssinica (Niger).